The sequence spans 338 residues: LIX1-like protein (338 aa).

The segment at 1-65 is disordered; it reads METMRAQRLQ…LLLAGAPGLP (65 aa). A compositionally biased stretch (low complexity) spans 29 to 38; the sequence is TGAPTSAATP. The segment covering 39-56 has biased composition (pro residues); that stretch reads PAGPPPAPPPPAPPPPPL.

The protein belongs to the LIX1 family.

In Rattus norvegicus (Rat), this protein is LIX1-like protein (Lix1l).